We begin with the raw amino-acid sequence, 88 residues long: M-zodatoxin-Lt1a (88 aa).

Residues 1 to 22 form the signal peptide; it reads MKYFVVALALAVALVCIAESTA. A propeptide spanning residues 23 to 62 is cleaved from the precursor; the sequence is YDVNEELENELDDLSDAAWLAKAAEDLQALDDFEESEESR. The Processing quadruplet motif signature appears at 59–62; sequence EESR.

Post-translationally, cleavage of the propeptide depends on the processing quadruplet motif (XXXR, with at least one of X being E). Expressed by the venom gland.

The protein localises to the secreted. In terms of biological role, has antimicrobial activity against Gram-positive bacteria (A.globiformis VKM Ac-1112 (MIC=0.5 uM), and B.subtilis VKM B-501 (MIC=1.0 uM)), Gram-negative bacteria (E.coli DH5-alpha (MIC=1.0 uM), E.coli MH1 (MIC=0.7 uM), and P.aeruginosa PAO1 (MIC=4.1 uM)), and yeasts (P.pastoris GS115 (MIC=17 uM), and S.cerevisiae Y190 (MIC&gt;33 uM)). Has a moderate hemolytic activity against rabbit erythrocytes. Causes paralysis, but is not lethal when injected into insect (M.domestica) larvae. The protein is M-zodatoxin-Lt1a of Lachesana tarabaevi (Spider).